Consider the following 180-residue polypeptide: Large ribosomal subunit protein uL5 (180 aa).

Belongs to the universal ribosomal protein uL5 family. In terms of assembly, part of the 50S ribosomal subunit; part of the 5S rRNA/L5/L18/L25 subcomplex. Contacts the 5S rRNA and the P site tRNA. Forms a bridge to the 30S subunit in the 70S ribosome.

Its function is as follows. This is one of the proteins that bind and probably mediate the attachment of the 5S RNA into the large ribosomal subunit, where it forms part of the central protuberance. In the 70S ribosome it contacts protein S13 of the 30S subunit (bridge B1b), connecting the 2 subunits; this bridge is implicated in subunit movement. Contacts the P site tRNA; the 5S rRNA and some of its associated proteins might help stabilize positioning of ribosome-bound tRNAs. The chain is Large ribosomal subunit protein uL5 from Chloroflexus aggregans (strain MD-66 / DSM 9485).